Here is a 137-residue protein sequence, read N- to C-terminus: Competence protein D (137 aa).

Involved in transformation (genetic competence for DNA uptake). The sequence is that of Competence protein D (comD) from Haemophilus influenzae (strain ATCC 51907 / DSM 11121 / KW20 / Rd).